We begin with the raw amino-acid sequence, 383 residues long: Ovalbumin (383 aa).

Glycine 2 is subject to N-acetylglycine. Residues 22-48 constitute a signal peptide (not cleaved); sequence HHANDNMLYSPFAILSTLAMVFLGAKD. Serine 69 bears the Phosphoserine mark. Cysteine 74 and cysteine 121 are disulfide-bonded. N-linked (GlcNAc...) asparagine glycosylation is found at asparagine 293 and asparagine 312. Serine 345 carries the post-translational modification Phosphoserine.

Belongs to the serpin family. Ov-serpin subfamily. The signal sequence is not cleaved. The functional signal for membrane translocation of ovalbumin becomes accessible when the nascent chain is 50 to 60 residues long. The hydrophobic sequence which lies between residues 27 and 43 folds back on the preceding residues to form an amphipathic hairpin structure which is the signal element recognized by the membrane. Major protein of egg white.

The protein localises to the secreted. Its function is as follows. Storage protein of egg white. Lack protease inhibitory activity. In Coturnix coturnix (Common quail), this protein is Ovalbumin (SERPINB14).